We begin with the raw amino-acid sequence, 453 residues long: Bifunctional protein GlmU (453 aa).

Residues 1–226 form a pyrophosphorylase region; the sequence is MLDILILAAG…IQEVEGINNR (226 aa). UDP-N-acetyl-alpha-D-glucosamine is bound by residues 7–10, Lys-21, Gln-72, 77–78, 99–101, Gly-136, Glu-151, Asn-166, and Asn-224; these read LAAG, GT, and YGD. Asp-101 is a binding site for Mg(2+). Residue Asn-224 participates in Mg(2+) binding. The linker stretch occupies residues 227–247; that stretch reads QQQATLERYYQQQQARALMDA. An N-acetyltransferase region spans residues 248 to 453; the sequence is GVTLLDPARF…QGWERPTRKS (206 aa). Residues Arg-330 and Lys-348 each contribute to the UDP-N-acetyl-alpha-D-glucosamine site. The active-site Proton acceptor is the His-360. Residues Tyr-363 and Asn-374 each contribute to the UDP-N-acetyl-alpha-D-glucosamine site. Acetyl-CoA contacts are provided by residues Ala-377, 383–384, Ser-402, Ala-420, and Arg-437; that span reads NY.

In the N-terminal section; belongs to the N-acetylglucosamine-1-phosphate uridyltransferase family. This sequence in the C-terminal section; belongs to the transferase hexapeptide repeat family. In terms of assembly, homotrimer. Mg(2+) is required as a cofactor.

Its subcellular location is the cytoplasm. The enzyme catalyses alpha-D-glucosamine 1-phosphate + acetyl-CoA = N-acetyl-alpha-D-glucosamine 1-phosphate + CoA + H(+). The catalysed reaction is N-acetyl-alpha-D-glucosamine 1-phosphate + UTP + H(+) = UDP-N-acetyl-alpha-D-glucosamine + diphosphate. It participates in nucleotide-sugar biosynthesis; UDP-N-acetyl-alpha-D-glucosamine biosynthesis; N-acetyl-alpha-D-glucosamine 1-phosphate from alpha-D-glucosamine 6-phosphate (route II): step 2/2. Its pathway is nucleotide-sugar biosynthesis; UDP-N-acetyl-alpha-D-glucosamine biosynthesis; UDP-N-acetyl-alpha-D-glucosamine from N-acetyl-alpha-D-glucosamine 1-phosphate: step 1/1. It functions in the pathway bacterial outer membrane biogenesis; LPS lipid A biosynthesis. In terms of biological role, catalyzes the last two sequential reactions in the de novo biosynthetic pathway for UDP-N-acetylglucosamine (UDP-GlcNAc). The C-terminal domain catalyzes the transfer of acetyl group from acetyl coenzyme A to glucosamine-1-phosphate (GlcN-1-P) to produce N-acetylglucosamine-1-phosphate (GlcNAc-1-P), which is converted into UDP-GlcNAc by the transfer of uridine 5-monophosphate (from uridine 5-triphosphate), a reaction catalyzed by the N-terminal domain. The protein is Bifunctional protein GlmU of Cellvibrio japonicus (strain Ueda107) (Pseudomonas fluorescens subsp. cellulosa).